Consider the following 217-residue polypeptide: MRAILMGPPGAGKGTQAADLITRYQIPHISTGDMFRAAIKAGTALGMKAKEYMDAGSLVPDEVTIGIVAERLAEPDCSKGFLLDGFPRTVAQADALDKILTQLKMNLDGVINIEVPEAKLLERLTGRRICRQCGGTYHMVFNPPAAEAVCDKCGGELYQRSDDTLETAKNRLQVYNDQTQPLIDYYREKGLLKEINGDQDIAQVLQDIVDAMEHGHD.

10-15 (GAGKGT) lines the ATP pocket. Positions 30 to 59 (STGDMFRAAIKAGTALGMKAKEYMDAGSLV) are NMP. Residues threonine 31, arginine 36, 57–59 (SLV), 85–88 (GFPR), and glutamine 92 each bind AMP. The interval 126–163 (GRRICRQCGGTYHMVFNPPAAEAVCDKCGGELYQRSDD) is LID. Arginine 127 contacts ATP. Zn(2+) contacts are provided by cysteine 130 and cysteine 133. 136-137 (TY) is a binding site for ATP. Positions 150 and 153 each coordinate Zn(2+). AMP is bound by residues arginine 160 and arginine 171. Position 199 (glutamine 199) interacts with ATP.

This sequence belongs to the adenylate kinase family. As to quaternary structure, monomer.

It localises to the cytoplasm. It catalyses the reaction AMP + ATP = 2 ADP. It participates in purine metabolism; AMP biosynthesis via salvage pathway; AMP from ADP: step 1/1. Catalyzes the reversible transfer of the terminal phosphate group between ATP and AMP. Plays an important role in cellular energy homeostasis and in adenine nucleotide metabolism. This chain is Adenylate kinase, found in Desulfitobacterium hafniense (strain DSM 10664 / DCB-2).